A 336-amino-acid chain; its full sequence is Phenylalanine--tRNA ligase alpha subunit (336 aa).

E257 contacts Mg(2+).

Belongs to the class-II aminoacyl-tRNA synthetase family. Phe-tRNA synthetase alpha subunit type 1 subfamily. In terms of assembly, tetramer of two alpha and two beta subunits. Mg(2+) serves as cofactor.

Its subcellular location is the cytoplasm. It catalyses the reaction tRNA(Phe) + L-phenylalanine + ATP = L-phenylalanyl-tRNA(Phe) + AMP + diphosphate + H(+). This Xanthomonas campestris pv. campestris (strain 8004) protein is Phenylalanine--tRNA ligase alpha subunit.